The chain runs to 332 residues: MDPRSEVLLRQAELFQGSLLLVGLPADDLLGKLPDARGWCWHAGDQAALDARFEGRVDFGVEAPQTGFEAAVLFLPKARDLTDYLLNALASRLAGRELFLVGEKRGGIEAAAKQLSPFGRARKLDSARHCQLWQVTVEHAPQAVSLDSLARPYQIELQDGPLTVVSLPGVFSHGRLDRGSALLLENIDKLPSGNLLDFGCGAGVLGAAIKRRYPHNEVIMLDVDAFATASSRLTLAANGLQAQVLTGDGIDAAPMGLNTILSNPPFHVGVHTDYMATENLLRKARQHLKSGGELRLVANNFLRYQPLIEEHVGQCEVRAQGNGFKIYSAKRP.

This sequence belongs to the methyltransferase superfamily. RsmC family. Monomer.

The protein localises to the cytoplasm. It carries out the reaction guanosine(1207) in 16S rRNA + S-adenosyl-L-methionine = N(2)-methylguanosine(1207) in 16S rRNA + S-adenosyl-L-homocysteine + H(+). Its function is as follows. Specifically methylates the guanine in position 1207 of 16S rRNA in the 30S particle. The polypeptide is Ribosomal RNA small subunit methyltransferase C (Pseudomonas syringae pv. syringae (strain B728a)).